We begin with the raw amino-acid sequence, 413 residues long: Endoplasmic reticulum resident protein 44.2 (413 aa).

Positions 1 to 21 (MNLASVLLLLAACHLSVSVNG) are cleaved as a signal peptide. The 115-residue stretch at 22–136 (QEHKEAIELS…LTNFVKFQLS (115 aa)) folds into the Thioredoxin domain. Cys184 and Cys233 are disulfide-bonded. N-linked (GlcNAc...) asparagine glycosylation is present at Asn264. The disordered stretch occupies residues 367–413 (KAARGITDDHEAQAPSTRPIDTTPPPSVFKELKPSDKRYSILQKSEL). Residues 396 to 413 (KELKPSDKRYSILQKSEL) show a composition bias toward basic and acidic residues. Residues 410–413 (KSEL) carry the Prevents secretion from ER motif.

Its subcellular location is the endoplasmic reticulum lumen. This is Endoplasmic reticulum resident protein 44.2 from Caenorhabditis elegans.